A 351-amino-acid chain; its full sequence is MFTFFTILSLCFKSWEQIITMEASKEAHHLPNYMKDDNVSQETKNLITSLPSDKDFMGYGLYNYKGCWYYPNTLQAVLDVQKHFKPRDTDIILASLPKGGTTWLKSLIFAVVHREKYRGTPQTHPLLLQNPHDLVPFLEVELYANSQIPDLAKYSSPMIFSTHMHLQALREATTKACKTVYVCRGIKDTFVSGWHYRNMLHRTKMDQATFELMFDAYCRGVLLYGPYWEHVLSYWKGSLEAKENVLFMKYEEIIEEPRVQVKRLAEFLECPFTKEEEESGSVEEILKLCSLRNLSNLEVNKNGTTRIGVDSQVFFRKGEVGDWKNHLTPQMAKTFDEIIDYRLGDSGLIFQ.

98–103 provides a ligand contact to 3'-phosphoadenylyl sulfate; sequence KGGTTW. The active-site Proton acceptor is histidine 163. 3'-phosphoadenylyl sulfate is bound by residues arginine 184, serine 192, tyrosine 250, and 316-318; that span reads RKG.

This sequence belongs to the sulfotransferase 1 family.

Its subcellular location is the cytoplasm. Sulfotransferase that utilizes 3'-phospho-5'-adenylyl sulfate (PAPS) as sulfonate donor. The polypeptide is Cytosolic sulfotransferase 11 (SOT11) (Arabidopsis thaliana (Mouse-ear cress)).